Consider the following 130-residue polypeptide: Protein ApaG (130 aa).

Residues 3 to 127 (SQTTRDIEVT…FSLDSPHEKP (125 aa)) form the ApaG domain.

This is Protein ApaG from Paramagnetospirillum magneticum (strain ATCC 700264 / AMB-1) (Magnetospirillum magneticum).